The sequence spans 830 residues: Probable glucan 1,3-beta-glucosidase D (830 aa).

Residues 1–34 (MPSQSRSRDRYRGRDTEYTRRRYPDEHDYSHDDH) show a composition bias toward basic and acidic residues. The disordered stretch occupies residues 1–279 (MPSQSRSRDR…PPMDARWPKG (279 aa)). Residues 1-301 (MPSQSRSRDR…GRPFWKQKKW (301 aa)) are Cytoplasmic-facing. Residues 35–51 (DYDYDDDDDDNDDLEQD) are compositionally biased toward acidic residues. Composition is skewed to basic and acidic residues over residues 52-98 (VTER…ERRR) and 110-175 (QHRE…KHQS). A compositionally biased stretch (low complexity) spans 181–194 (SASHLLSADALARL). Composition is skewed to basic and acidic residues over residues 198–215 (YEKE…AAKA), 228–243 (EQER…DRSR), and 253–264 (EEGRGPEMEFRR). A helical; Signal-anchor for type II membrane protein transmembrane segment spans residues 302-322 (LIGIGVVILILVIVIPVAVVV). Residues 323–830 (SKKHNDKPNA…PDFGSLPEYY (508 aa)) lie on the Extracellular side of the membrane. Positions 327–351 (NDKPNATTTQPDGTTPSNSNLDGLS) are disordered. Residues 330-348 (PNATTTQPDGTTPSNSNLD) show a composition bias toward polar residues. Asn331, Asn376, Asn381, Asn393, Asn546, and Asn558 each carry an N-linked (GlcNAc...) asparagine glycan. The active-site Proton donor is Glu597. N-linked (GlcNAc...) asparagine glycans are attached at residues Asn610, Asn636, Asn669, and Asn689. Glu701 functions as the Nucleophile in the catalytic mechanism.

This sequence belongs to the glycosyl hydrolase 5 (cellulase A) family.

The protein resides in the cell membrane. The enzyme catalyses Successive hydrolysis of beta-D-glucose units from the non-reducing ends of (1-&gt;3)-beta-D-glucans, releasing alpha-glucose.. Glucosidase involved in the degradation of cellulosic biomass. Active on lichenan. The chain is Probable glucan 1,3-beta-glucosidase D (exgD) from Aspergillus clavatus (strain ATCC 1007 / CBS 513.65 / DSM 816 / NCTC 3887 / NRRL 1 / QM 1276 / 107).